The sequence spans 89 residues: Small ribosomal subunit protein bS20 (89 aa).

The protein belongs to the bacterial ribosomal protein bS20 family.

Binds directly to 16S ribosomal RNA. The sequence is that of Small ribosomal subunit protein bS20 from Wolbachia pipientis wMel.